Consider the following 204-residue polypeptide: Thiamine-phosphate synthase (204 aa).

Residues 34 to 38 and D66 contribute to the 4-amino-2-methyl-5-(diphosphooxymethyl)pyrimidine site; that span reads QYRDK. Mg(2+)-binding residues include D67 and D86. Residue S104 participates in 4-amino-2-methyl-5-(diphosphooxymethyl)pyrimidine binding. 131 to 133 serves as a coordination point for 2-[(2R,5Z)-2-carboxy-4-methylthiazol-5(2H)-ylidene]ethyl phosphate; it reads TST. A 4-amino-2-methyl-5-(diphosphooxymethyl)pyrimidine-binding site is contributed by K134. 2-[(2R,5Z)-2-carboxy-4-methylthiazol-5(2H)-ylidene]ethyl phosphate-binding positions include G160 and 180–181; that span reads VS.

The protein belongs to the thiamine-phosphate synthase family. It depends on Mg(2+) as a cofactor.

It carries out the reaction 2-[(2R,5Z)-2-carboxy-4-methylthiazol-5(2H)-ylidene]ethyl phosphate + 4-amino-2-methyl-5-(diphosphooxymethyl)pyrimidine + 2 H(+) = thiamine phosphate + CO2 + diphosphate. It catalyses the reaction 2-(2-carboxy-4-methylthiazol-5-yl)ethyl phosphate + 4-amino-2-methyl-5-(diphosphooxymethyl)pyrimidine + 2 H(+) = thiamine phosphate + CO2 + diphosphate. The catalysed reaction is 4-methyl-5-(2-phosphooxyethyl)-thiazole + 4-amino-2-methyl-5-(diphosphooxymethyl)pyrimidine + H(+) = thiamine phosphate + diphosphate. It functions in the pathway cofactor biosynthesis; thiamine diphosphate biosynthesis; thiamine phosphate from 4-amino-2-methyl-5-diphosphomethylpyrimidine and 4-methyl-5-(2-phosphoethyl)-thiazole: step 1/1. Its function is as follows. Condenses 4-methyl-5-(beta-hydroxyethyl)thiazole monophosphate (THZ-P) and 2-methyl-4-amino-5-hydroxymethyl pyrimidine pyrophosphate (HMP-PP) to form thiamine monophosphate (TMP). This Picrophilus torridus (strain ATCC 700027 / DSM 9790 / JCM 10055 / NBRC 100828 / KAW 2/3) protein is Thiamine-phosphate synthase.